A 249-amino-acid chain; its full sequence is 5'-nucleotidase SurE (249 aa).

Residues aspartate 8, aspartate 9, serine 39, and asparagine 91 each contribute to the a divalent metal cation site.

It belongs to the SurE nucleotidase family. It depends on a divalent metal cation as a cofactor.

It is found in the cytoplasm. It carries out the reaction a ribonucleoside 5'-phosphate + H2O = a ribonucleoside + phosphate. Its function is as follows. Nucleotidase that shows phosphatase activity on nucleoside 5'-monophosphates. The chain is 5'-nucleotidase SurE from Haemophilus influenzae (strain PittGG).